The following is a 140-amino-acid chain: Small ribosomal subunit protein uS9A (140 aa).

This sequence belongs to the universal ribosomal protein uS9 family. In terms of assembly, component of the small ribosomal subunit (SSU). Mature yeast ribosomes consist of a small (40S) and a large (60S) subunit. The 40S small subunit contains 1 molecule of ribosomal RNA (18S rRNA) and at least 33 different proteins. The large 60S subunit contains 3 rRNA molecules (25S, 5.8S and 5S rRNA) and at least 46 different proteins.

The protein resides in the cytoplasm. Functionally, component of the ribosome, a large ribonucleoprotein complex responsible for the synthesis of proteins in the cell. The small ribosomal subunit (SSU) binds messenger RNAs (mRNAs) and translates the encoded message by selecting cognate aminoacyl-transfer RNA (tRNA) molecules. The large subunit (LSU) contains the ribosomal catalytic site termed the peptidyl transferase center (PTC), which catalyzes the formation of peptide bonds, thereby polymerizing the amino acids delivered by tRNAs into a polypeptide chain. The nascent polypeptides leave the ribosome through a tunnel in the LSU and interact with protein factors that function in enzymatic processing, targeting, and the membrane insertion of nascent chains at the exit of the ribosomal tunnel. This Schizosaccharomyces pombe (strain 972 / ATCC 24843) (Fission yeast) protein is Small ribosomal subunit protein uS9A (rps1601).